Here is a 221-residue protein sequence, read N- to C-terminus: Small ribosomal subunit protein uS3 (221 aa).

The KH type-2 domain maps to 39–107 (IRNYIKEKLY…TVILNIIEVK (69 aa)).

This sequence belongs to the universal ribosomal protein uS3 family. As to quaternary structure, part of the 30S ribosomal subunit. Forms a tight complex with proteins S10 and S14.

In terms of biological role, binds the lower part of the 30S subunit head. Binds mRNA in the 70S ribosome, positioning it for translation. The sequence is that of Small ribosomal subunit protein uS3 from Caldanaerobacter subterraneus subsp. tengcongensis (strain DSM 15242 / JCM 11007 / NBRC 100824 / MB4) (Thermoanaerobacter tengcongensis).